The chain runs to 279 residues: Thioredoxin-like 1-2, chloroplastic (279 aa).

A chloroplast-targeting transit peptide spans 1–34 (MAATAAQAVAVKGSVAVPPCGSRGRRRGAVASVR). In terms of domain architecture, Thioredoxin spans 61–203 (PRRSRPVPRN…FRDALAKHKP (143 aa)). Active-site nucleophile residues include cysteine 126 and cysteine 129. Cysteine 126 and cysteine 129 are disulfide-bonded. The segment at 242–279 (GDAAAAQELDRGSTKLSPPAKPLVKQGSEERSLVSSGR) is disordered.

The protein belongs to the thioredoxin family.

It is found in the plastid. It localises to the chloroplast. Functionally, probable thiol-disulfide oxidoreductase that may participate in various redox reactions. This is Thioredoxin-like 1-2, chloroplastic from Oryza sativa subsp. japonica (Rice).